We begin with the raw amino-acid sequence, 551 residues long: BAG family molecular chaperone regulator 8, chloroplastic (551 aa).

Positions 1–19 (MASHHHHNHNHVCSRHQNH) are enriched in basic residues. A disordered region spans residues 1–46 (MASHHHHNHNHVCSRHQNHHNNTPQFATSPNCCNKSNHPSPPPAED). A chloroplast-targeting transit peptide spans 1 to 52 (MASHHHHNHNHVCSRHQNHHNNTPQFATSPNCCNKSNHPSPPPAEDNLLHLV). A compositionally biased stretch (polar residues) spans 20–38 (HNNTPQFATSPNCCNKSNH). An IQ domain is found at 131–160 (RDSAARVIQTHFRSYLVHRSISFRQLKELA). Residues 147–228 (VHRSISFRQL…RFVQYVDDCV (82 aa)) enclose the BAG domain. The interval 246–281 (GKKPQGFGTSSEDEDNNADMSDDSEEVPVSSIDKRK) is disordered. Positions 256–271 (SEDEDNNADMSDDSEE) are enriched in acidic residues. Phosphoserine is present on Ser-332. 2 disordered regions span residues 414 to 433 (DEGKRRSSKTGSRVLVKGSG) and 450 to 551 (NVYK…KMEP). Over residues 479 to 499 (GEEKGNVNEVEEIKYVPKENE) the composition is skewed to basic and acidic residues. Residues 500–513 (SFEEEEEKETDSEN) are compositionally biased toward acidic residues. Over residues 522 to 534 (EGDKRVTKKEVQH) the composition is skewed to basic and acidic residues.

As to quaternary structure, binds to the ATPase domain of HSP70/HSC70 chaperones.

Its subcellular location is the plastid. The protein localises to the chloroplast. In terms of biological role, co-chaperone that regulates diverse cellular pathways, such as programmed cell death and stress responses. In Arabidopsis thaliana (Mouse-ear cress), this protein is BAG family molecular chaperone regulator 8, chloroplastic (BAG1).